The chain runs to 335 residues: MCPQKLTISWFAIVLLVSPLMAMWELEKDVYVVEVDWTPDAPGETVNLTCDTPEEDDITWTSDQRHGVIGSGKTLTITVKEFLDAGQYTCHKGGETLSHSHLLLHKKENGIWSTEILKNFKNKTFLKCEAPNYSGRFTCSWLVQRNMDLKFNIKSSSSSPDSRAVTCGMASLSAEKVTLDQRDYEKYSVSCQEDVTCPTAEETLPIELALEARQQNKYENYSTSFFIRDIIKPDPPKNLQMKPLKNSQVEVSWEYPDSWSTPHSYFSLKFFVRIQRKKEKMKETEEGCNQKGAFLVEKTSTEVQCKGGNVCVQAQDRYYNSSCSKWACVPCRVRS.

The first 22 residues, 1–22 (MCPQKLTISWFAIVLLVSPLMA), serve as a signal peptide directing secretion. The region spanning 23 to 106 (MWELEKDVYV…LSHSHLLLHK (84 aa)) is the Ig-like C2-type domain. Asn-47 carries N-linked (GlcNAc...) asparagine glycosylation. Cysteines 50 and 90 form a disulfide. N-linked (GlcNAc...) asparagine glycans are attached at residues Asn-122, Asn-132, and Asn-220. The region spanning 233-324 (PDPPKNLQMK…QDRYYNSSCS (92 aa)) is the Fibronectin type-III domain.

Belongs to the IL-12B family. In terms of assembly, heterodimer with IL12A; disulfide-linked. The heterodimer is known as interleukin IL-12. Heterodimer with IL23A; disulfide-linked. The heterodimer is known as interleukin IL-23. Also secreted as a monomer. Interacts with NBR1; this interaction promotes IL-12 secretion.

It is found in the secreted. In terms of biological role, cytokine that can act as a growth factor for activated T and NK cells, enhance the lytic activity of NK/lymphokine-activated killer cells, and stimulate the production of IFN-gamma by resting PBMC. Its function is as follows. Associates with IL23A to form the IL-23 interleukin, a heterodimeric cytokine which functions in innate and adaptive immunity. IL-23 may constitute with IL-17 an acute response to infection in peripheral tissues. IL-23 binds to a heterodimeric receptor complex composed of IL12RB1 and IL23R, activates the Jak-Stat signaling cascade, stimulates memory rather than naive T-cells and promotes production of pro-inflammatory cytokines. IL-23 induces autoimmune inflammation and thus may be responsible for autoimmune inflammatory diseases and may be important for tumorigenesis. The chain is Interleukin-12 subunit beta (Il12b) from Mus musculus (Mouse).